The sequence spans 645 residues: UPF0313 protein CLM_0251 (645 aa).

The region spanning 295-566 is the Radical SAM core domain; the sequence is AIKEVKFSIT…RMQRALLQFS (272 aa). 3 residues coordinate [4Fe-4S] cluster: C309, C313, and C316. A disordered region spans residues 598–645; it reads NKPYKKSHKKNNAKNNNNHYNKNNNYNKNKDISKKNKKNSLSKHKKRK. A compositionally biased stretch (basic residues) spans 600–609; it reads PYKKSHKKNN. Positions 610 to 624 are enriched in low complexity; that stretch reads AKNNNNHYNKNNNYN. The segment covering 632 to 645 has biased composition (basic residues); that stretch reads KNKKNSLSKHKKRK.

The protein belongs to the UPF0313 family. Requires [4Fe-4S] cluster as cofactor.

In Clostridium botulinum (strain Kyoto / Type A2), this protein is UPF0313 protein CLM_0251.